Reading from the N-terminus, the 368-residue chain is Agmatine deiminase (368 aa).

Catalysis depends on cysteine 357, which acts as the Amidino-cysteine intermediate.

It belongs to the agmatine deiminase family. In terms of assembly, homodimer.

The enzyme catalyses agmatine + H2O = N-carbamoylputrescine + NH4(+). Its pathway is amine and polyamine biosynthesis; putrescine biosynthesis via agmatine pathway; N-carbamoylputrescine from agmatine: step 1/1. In terms of biological role, mediates the hydrolysis of agmatine into N-carbamoylputrescine in the arginine decarboxylase (ADC) pathway of putrescine biosynthesis, a basic polyamine. The polypeptide is Agmatine deiminase (Pseudomonas putida (strain ATCC 700007 / DSM 6899 / JCM 31910 / BCRC 17059 / LMG 24140 / F1)).